The sequence spans 104 residues: Large ribosomal subunit protein uL23 (104 aa).

The protein belongs to the universal ribosomal protein uL23 family. Part of the 50S ribosomal subunit. Contacts protein L29, and trigger factor when it is bound to the ribosome.

Its function is as follows. One of the early assembly proteins it binds 23S rRNA. One of the proteins that surrounds the polypeptide exit tunnel on the outside of the ribosome. Forms the main docking site for trigger factor binding to the ribosome. The protein is Large ribosomal subunit protein uL23 of Burkholderia multivorans (strain ATCC 17616 / 249).